A 187-amino-acid chain; its full sequence is Rusticyanin (187 aa).

An N-terminal signal peptide occupies residues 1–32 (MYTQNTMKKNWYVTVGAAAALAATVGMGTAMA). Residues 85 to 187 (SFEVHDKKNP…TGMFGKIVVK (103 aa)) enclose the Plastocyanin-like domain. The Cu cation site is built by His-117, Cys-170, His-175, and Met-180.

Monomer. Requires Cu cation as cofactor.

It is found in the periplasm. Its function is as follows. Electron carrier from cytochrome c552 to the A-type oxidase. In Acidithiobacillus ferrooxidans (strain ATCC 23270 / DSM 14882 / CIP 104768 / NCIMB 8455) (Ferrobacillus ferrooxidans (strain ATCC 23270)), this protein is Rusticyanin (rus).